We begin with the raw amino-acid sequence, 373 residues long: Queuine tRNA-ribosyltransferase (373 aa).

Residue aspartate 90 is the Proton acceptor of the active site. Substrate is bound by residues 90–94, aspartate 144, glutamine 193, and glycine 220; that span reads DSGGF. Residues 251 to 257 form an RNA binding region; that stretch reads GVGTPED. Aspartate 270 acts as the Nucleophile in catalysis. Residues 275-279 form an RNA binding; important for wobble base 34 recognition region; the sequence is TRNAR. 4 residues coordinate Zn(2+): cysteine 308, cysteine 310, cysteine 313, and histidine 339.

This sequence belongs to the queuine tRNA-ribosyltransferase family. Homodimer. Within each dimer, one monomer is responsible for RNA recognition and catalysis, while the other monomer binds to the replacement base PreQ1. Requires Zn(2+) as cofactor.

The enzyme catalyses 7-aminomethyl-7-carbaguanine + guanosine(34) in tRNA = 7-aminomethyl-7-carbaguanosine(34) in tRNA + guanine. Its pathway is tRNA modification; tRNA-queuosine biosynthesis. Catalyzes the base-exchange of a guanine (G) residue with the queuine precursor 7-aminomethyl-7-deazaguanine (PreQ1) at position 34 (anticodon wobble position) in tRNAs with GU(N) anticodons (tRNA-Asp, -Asn, -His and -Tyr). Catalysis occurs through a double-displacement mechanism. The nucleophile active site attacks the C1' of nucleotide 34 to detach the guanine base from the RNA, forming a covalent enzyme-RNA intermediate. The proton acceptor active site deprotonates the incoming PreQ1, allowing a nucleophilic attack on the C1' of the ribose to form the product. After dissociation, two additional enzymatic reactions on the tRNA convert PreQ1 to queuine (Q), resulting in the hypermodified nucleoside queuosine (7-(((4,5-cis-dihydroxy-2-cyclopenten-1-yl)amino)methyl)-7-deazaguanosine). This is Queuine tRNA-ribosyltransferase from Campylobacter jejuni subsp. doylei (strain ATCC BAA-1458 / RM4099 / 269.97).